An 853-amino-acid chain; its full sequence is DNA mismatch repair protein MutS (853 aa).

614 to 621 (GPNMGGKS) contributes to the ATP binding site.

Belongs to the DNA mismatch repair MutS family.

Its function is as follows. This protein is involved in the repair of mismatches in DNA. It is possible that it carries out the mismatch recognition step. This protein has a weak ATPase activity. The polypeptide is DNA mismatch repair protein MutS (Escherichia coli O6:K15:H31 (strain 536 / UPEC)).